We begin with the raw amino-acid sequence, 140 residues long: RxLR effector protein CRE2 (140 aa).

A signal peptide spans 1–24 (MRWLIWTAVSTLVMLLAMTEVSAS). Positions 56–72 (RSLRDKSSSLITESEER) match the RxLR-dEER motif.

Belongs to the RxLR effector family.

It localises to the secreted. The protein localises to the host cell. Its function is as follows. Effector that is involved in host plant infection. Contributes to virulence during the early infection stage, by inhibiting plant defense responses induced by both PAMP-triggered immunity (PTI) and effector-triggered immunity (ETI). The protein is RxLR effector protein CRE2 of Phytophthora infestans (strain T30-4) (Potato late blight agent).